Here is a 222-residue protein sequence, read N- to C-terminus: Small ribosomal subunit protein uS7m (222 aa).

A mitochondrion-targeting transit peptide spans 1-14 (MTTKLARFAQKRWI).

It belongs to the universal ribosomal protein uS7 family. As to quaternary structure, component of the mitochondrial ribosome small subunit (28S) which comprises a 12S rRNA and about 30 distinct proteins.

It is found in the mitochondrion. The protein is Small ribosomal subunit protein uS7m (mrps-7) of Caenorhabditis elegans.